Reading from the N-terminus, the 406-residue chain is Cysteine desulfurase IscS (406 aa).

Pyridoxal 5'-phosphate is bound by residues 75 to 76 (AT), Asn155, Gln183, and 203 to 205 (SSH). Residue Lys206 is modified to N6-(pyridoxal phosphate)lysine. Thr243 lines the pyridoxal 5'-phosphate pocket. Cys330 acts as the Cysteine persulfide intermediate in catalysis. Cys330 is a [2Fe-2S] cluster binding site.

Belongs to the class-V pyridoxal-phosphate-dependent aminotransferase family. NifS/IscS subfamily. Homodimer. Forms a heterotetramer with IscU, interacts with other sulfur acceptors. Requires pyridoxal 5'-phosphate as cofactor.

Its subcellular location is the cytoplasm. It carries out the reaction (sulfur carrier)-H + L-cysteine = (sulfur carrier)-SH + L-alanine. It participates in cofactor biosynthesis; iron-sulfur cluster biosynthesis. In terms of biological role, master enzyme that delivers sulfur to a number of partners involved in Fe-S cluster assembly, tRNA modification or cofactor biosynthesis. Catalyzes the removal of elemental sulfur atoms from cysteine to produce alanine. Functions as a sulfur delivery protein for Fe-S cluster synthesis onto IscU, an Fe-S scaffold assembly protein, as well as other S acceptor proteins. The chain is Cysteine desulfurase IscS from Glaesserella parasuis serovar 5 (strain SH0165) (Haemophilus parasuis).